The primary structure comprises 1019 residues: UPF0182 protein Tery_0938 (1019 aa).

9 helical membrane-spanning segments follow: residues 23 to 43, 67 to 87, 128 to 148, 192 to 212, 213 to 233, 270 to 290, 313 to 333, 355 to 375, and 416 to 436; these read IHILIILFFSFVCWEILGFST, TETWLWITTFLISMGFFLVNL, LSLSWLLCCIFGLILLVGLIL, LWLLGLFLLLSFAIIINPILW, LSVFAVVLSLVFSFILSSHWA, FWLIGLFLYGFVACILIYLLS, LGGGFILTIAFSYFIACFELL, YVFLGILALLIAFFLFWQAIF, and AILTWYLIIAVIAGWLIPKIV.

It belongs to the UPF0182 family.

It is found in the cell membrane. The protein is UPF0182 protein Tery_0938 of Trichodesmium erythraeum (strain IMS101).